We begin with the raw amino-acid sequence, 132 residues long: Small ribosomal subunit protein uS8 (132 aa).

The protein belongs to the universal ribosomal protein uS8 family. In terms of assembly, part of the 30S ribosomal subunit. Contacts proteins S5 and S12.

One of the primary rRNA binding proteins, it binds directly to 16S rRNA central domain where it helps coordinate assembly of the platform of the 30S subunit. This chain is Small ribosomal subunit protein uS8, found in Rhodococcus jostii (strain RHA1).